Consider the following 347-residue polypeptide: NADH-ubiquinone oxidoreductase chain 2 (347 aa).

The next 11 helical transmembrane spans lie at 3 to 23 (PPIL…VLTS), 25 to 45 (HWLL…PILM), 60 to 80 (FLTQ…NLMF), 96 to 116 (GLVT…FWVP), 122 to 142 (ISLS…LSIL), 153 to 173 (LLIT…LNQT), 178 to 198 (ILAY…TYNP), 200 to 220 (LMIL…MLFM), 237 to 257 (LPLM…LPPL), 274 to 294 (DMII…YFYM), and 323 to 343 (IILL…TPMM).

The protein belongs to the complex I subunit 2 family. Core subunit of respiratory chain NADH dehydrogenase (Complex I) which is composed of 45 different subunits. Interacts with TMEM242.

Its subcellular location is the mitochondrion inner membrane. It carries out the reaction a ubiquinone + NADH + 5 H(+)(in) = a ubiquinol + NAD(+) + 4 H(+)(out). Functionally, core subunit of the mitochondrial membrane respiratory chain NADH dehydrogenase (Complex I) which catalyzes electron transfer from NADH through the respiratory chain, using ubiquinone as an electron acceptor. Essential for the catalytic activity and assembly of complex I. This Halichoerus grypus (Gray seal) protein is NADH-ubiquinone oxidoreductase chain 2.